Here is a 102-residue protein sequence, read N- to C-terminus: NADH-quinone oxidoreductase subunit K 1 (102 aa).

3 helical membrane-spanning segments follow: residues 5 to 25, 31 to 51, and 65 to 85; these read LSHY…GIFL, IVIL…MVAF, and LFIL…LVVF.

The protein belongs to the complex I subunit 4L family. As to quaternary structure, NDH-1 is composed of 14 different subunits. Subunits NuoA, H, J, K, L, M, N constitute the membrane sector of the complex.

The protein localises to the cell inner membrane. The enzyme catalyses a quinone + NADH + 5 H(+)(in) = a quinol + NAD(+) + 4 H(+)(out). Its function is as follows. NDH-1 shuttles electrons from NADH, via FMN and iron-sulfur (Fe-S) centers, to quinones in the respiratory chain. The immediate electron acceptor for the enzyme in this species is believed to be ubiquinone. Couples the redox reaction to proton translocation (for every two electrons transferred, four hydrogen ions are translocated across the cytoplasmic membrane), and thus conserves the redox energy in a proton gradient. This is NADH-quinone oxidoreductase subunit K 1 from Rhizobium etli (strain ATCC 51251 / DSM 11541 / JCM 21823 / NBRC 15573 / CFN 42).